A 117-amino-acid chain; its full sequence is MKFVYKEEHPFEKRRSEGEKIRKKYPDRVPVIVEKAPKARIGDLDKKKYLVPSDLTVGQFYFLIRKRIHLRAEDALFFFVNNVIPPTSATMGQLYQEHHEEDFFLYIAYSDESVYGL.

The tract at residues M1–R22 is interaction with beta-tubulin. Positions A36–I68 are interaction with GABRG2. The interaction with GPHN stretch occupies residues A36–L117. The segment at K48–L50 is interaction with LIR (LC3 nteracting Region) motif of ATG3. G116 is lipidated: Phosphatidylethanolamine amidated glycine; alternate. G116 carries Phosphatidylserine amidated glycine; alternate lipidation. L117 is a propeptide (removed in mature form).

Belongs to the ATG8 family. As to quaternary structure, interacts with GPHN and NSF. Interacts with ATG3, ATG7 and ATG13. Interacts with alpha-tubulin. Interacts with beta-tubulin. Interacts with GABRG2. Interacts with RB1CC1. Interacts with ULK1. Interacts with CALR. Interacts with DDX47. Interacts with TP53INP1 and TP53INP2. Interacts with TBC1D5. Interacts with TBC1D25. Directly interacts with SQSTM1. Interacts with MAPK15. Interacts with TECPR2. Interacts with PCM1. Interacts with TRIM5 and TRIM21. Interacts with MEFV. Interacts with KIF21B. Interacts with WDFY3; this interaction is required for WDFY3 recruitment to MAP1LC3B-positive p62/SQSTM1 bodies. Interacts with FLCN; interaction regulates autophagy. Interacts with UBA5. Interacts with KBTBD6 and KBTBD7; the interaction is direct and required for the ubiquitination of TIAM1. Interacts with reticulophagy regulators RETREG1, RETREG2 and RETREG3. Interacts with IRGM. Interacts with STX17. Interacts with CT55; this interaction may be important for GABARAP protein stability. Interacts with DNM2. Interacts with NCOA4 (via C-terminus). Post-translationally, the precursor molecule is cleaved by ATG4 (ATG4A, ATG4B, ATG4C or ATG4D) to expose the glycine at the C-terminus and form the cytosolic form, GABARAP-I. The processed form is then activated by APG7L/ATG7, transferred to ATG3 and conjugated to phosphatidylethanolamine (PE) phospholipid to form the membrane-bound form, GABARAP-II. During non-canonical autophagy, the processed form is conjugated to phosphatidylserine (PS) phospholipid. ATG4 proteins also mediate the delipidation of PE-conjugated forms. In addition, ATG4B and ATG4D mediate delipidation of ATG8 proteins conjugated to PS during non-canonical autophagy. ATG4B constitutes the major protein for proteolytic activation. ATG4D is the main enzyme for delipidation activity. Expressed in brain (at protein level). Can be found in both somatodendritic and axonal compartment of neurons.

It is found in the cytoplasmic vesicle. It localises to the autophagosome membrane. The protein resides in the endomembrane system. Its subcellular location is the cytoplasm. The protein localises to the cytoskeleton. It is found in the golgi apparatus membrane. In terms of biological role, ubiquitin-like modifier that plays a role in intracellular transport of GABA(A) receptors and its interaction with the cytoskeleton. Involved in autophagy: while LC3s are involved in elongation of the phagophore membrane, the GABARAP/GATE-16 subfamily is essential for a later stage in autophagosome maturation. Through its interaction with the reticulophagy receptor TEX264, participates in the remodeling of subdomains of the endoplasmic reticulum into autophagosomes upon nutrient stress, which then fuse with lysosomes for endoplasmic reticulum turnover. Also required for the local activation of the CUL3(KBTBD6/7) E3 ubiquitin ligase complex, regulating ubiquitination a nd degradation of TIAM1, a guanyl-nucleotide exchange factor (GEF) that activates RAC1 and downstream signal transduction. Thereby, regulates different biological processes including the organization of the cytoskeleton, cell migration and proliferation. Involved in apoptosis. In Rattus norvegicus (Rat), this protein is Gamma-aminobutyric acid receptor-associated protein.